We begin with the raw amino-acid sequence, 105 residues long: Putative membrane protein insertion efficiency factor (105 aa).

Residues 68–105 are disordered; that stretch reads FHPGGLDPVPPRRNESGTEISDARPGSDGEASPGAPGL. A compositionally biased stretch (basic and acidic residues) spans 77 to 94; that stretch reads PPRRNESGTEISDARPGS.

It belongs to the UPF0161 family.

Its subcellular location is the cell membrane. In terms of biological role, could be involved in insertion of integral membrane proteins into the membrane. The chain is Putative membrane protein insertion efficiency factor from Thermobifida fusca (strain YX).